Reading from the N-terminus, the 1463-residue chain is Clustered mitochondria protein homolog (1463 aa).

Residues 1-79 (MAKNKKQNGK…ETEQQQQQQE (79 aa)) form a disordered region. A compositionally biased stretch (low complexity) spans 10-22 (KAKTPPVVAAAAG). In terms of domain architecture, Clu spans 374 to 616 (RAEDTFSSKL…RTFPPDVNFL (243 aa)). 3 disordered regions span residues 684–753 (AQKT…SEDA), 942–988 (GDGQ…SVPS), and 1387–1463 (QKEA…RRKS). Residues 692 to 702 (KQAAIEAAAPA) are compositionally biased toward low complexity. Positions 703-731 (EGDKTPAKDAKDGKEAGKDANDGKEEGST) are enriched in basic and acidic residues. A compositionally biased stretch (basic residues) spans 955–964 (GGKKQNKQSK). The segment covering 965–980 (RGGGGGGGKGAAGGGR) has biased composition (gly residues). Residues 1438–1456 (AEAASHTAGGAAANTAAPA) are compositionally biased toward low complexity.

This sequence belongs to the CLU family.

It localises to the cytoplasm. Functionally, mRNA-binding protein involved in proper cytoplasmic distribution of mitochondria. The protein is Clustered mitochondria protein homolog of Anopheles gambiae (African malaria mosquito).